The sequence spans 209 residues: Redox-sensing transcriptional repressor Rex (209 aa).

The H-T-H motif DNA-binding region spans 16 to 55; the sequence is LYYRFIQNLSLSGKQRVSSAELSEAVKVDSATIRRDFSYF. An NAD(+)-binding site is contributed by 90 to 95; sequence GVGNLG.

Belongs to the transcriptional regulatory Rex family. As to quaternary structure, homodimer.

The protein localises to the cytoplasm. In terms of biological role, modulates transcription in response to changes in cellular NADH/NAD(+) redox state. The sequence is that of Redox-sensing transcriptional repressor Rex from Bacillus cereus (strain ATCC 10987 / NRS 248).